A 249-amino-acid polypeptide reads, in one-letter code: Metallo-beta-lactamase type 2 (249 aa).

Residues 1-22 form the signal peptide; it reads MMKKMKWALVLALGLTGLNAFG. Residues histidine 98, histidine 100, aspartate 102, histidine 161, and cysteine 180 each coordinate Zn(2+). Position 183 (lysine 183) interacts with substrate. Residue histidine 222 coordinates Zn(2+).

Belongs to the metallo-beta-lactamase superfamily. Class-B beta-lactamase family. In terms of assembly, monomer. The cofactor is Zn(2+).

The protein localises to the periplasm. The enzyme catalyses a beta-lactam + H2O = a substituted beta-amino acid. Confers resistance to the different beta-lactams antibiotics (penicillin, cephalosporin and carbapenem) via the hydrolysis of the beta-lactam ring. This Elizabethkingia meningoseptica (Chryseobacterium meningosepticum) protein is Metallo-beta-lactamase type 2 (blaB4).